Reading from the N-terminus, the 461-residue chain is Bifunctional protein GlmU (461 aa).

The pyrophosphorylase stretch occupies residues 1-230 (MECLMAVILA…SSEILGINDR (230 aa)). UDP-N-acetyl-alpha-D-glucosamine is bound by residues 9–12 (LAAG), Lys-23, Gln-73, 78–79 (GT), 101–103 (YGD), Gly-140, Glu-155, Asn-170, and Asn-228. Asp-103 contacts Mg(2+). Asn-228 lines the Mg(2+) pocket. The interval 231 to 251 (VQLAEAGRIIRSRILKRHMKN) is linker. An N-acetyltransferase region spans residues 252 to 461 (GVTIIDPDST…KKGMLRQEKE (210 aa)). UDP-N-acetyl-alpha-D-glucosamine-binding residues include Arg-333 and Lys-351. The active-site Proton acceptor is His-363. UDP-N-acetyl-alpha-D-glucosamine is bound by residues Tyr-366 and Asn-377. Acetyl-CoA-binding positions include 386 to 387 (NY), Ala-423, and Arg-440.

It in the N-terminal section; belongs to the N-acetylglucosamine-1-phosphate uridyltransferase family. In the C-terminal section; belongs to the transferase hexapeptide repeat family. Homotrimer. Mg(2+) is required as a cofactor.

It is found in the cytoplasm. It carries out the reaction alpha-D-glucosamine 1-phosphate + acetyl-CoA = N-acetyl-alpha-D-glucosamine 1-phosphate + CoA + H(+). It catalyses the reaction N-acetyl-alpha-D-glucosamine 1-phosphate + UTP + H(+) = UDP-N-acetyl-alpha-D-glucosamine + diphosphate. Its pathway is nucleotide-sugar biosynthesis; UDP-N-acetyl-alpha-D-glucosamine biosynthesis; N-acetyl-alpha-D-glucosamine 1-phosphate from alpha-D-glucosamine 6-phosphate (route II): step 2/2. It participates in nucleotide-sugar biosynthesis; UDP-N-acetyl-alpha-D-glucosamine biosynthesis; UDP-N-acetyl-alpha-D-glucosamine from N-acetyl-alpha-D-glucosamine 1-phosphate: step 1/1. The protein operates within bacterial outer membrane biogenesis; LPS lipid A biosynthesis. In terms of biological role, catalyzes the last two sequential reactions in the de novo biosynthetic pathway for UDP-N-acetylglucosamine (UDP-GlcNAc). The C-terminal domain catalyzes the transfer of acetyl group from acetyl coenzyme A to glucosamine-1-phosphate (GlcN-1-P) to produce N-acetylglucosamine-1-phosphate (GlcNAc-1-P), which is converted into UDP-GlcNAc by the transfer of uridine 5-monophosphate (from uridine 5-triphosphate), a reaction catalyzed by the N-terminal domain. The sequence is that of Bifunctional protein GlmU from Acetivibrio thermocellus (strain ATCC 27405 / DSM 1237 / JCM 9322 / NBRC 103400 / NCIMB 10682 / NRRL B-4536 / VPI 7372) (Clostridium thermocellum).